A 119-amino-acid polypeptide reads, in one-letter code: Holo-[acyl-carrier-protein] synthase (119 aa).

2 residues coordinate Mg(2+): D5 and E51.

This sequence belongs to the P-Pant transferase superfamily. AcpS family. Requires Mg(2+) as cofactor.

The protein localises to the cytoplasm. It carries out the reaction apo-[ACP] + CoA = holo-[ACP] + adenosine 3',5'-bisphosphate + H(+). In terms of biological role, transfers the 4'-phosphopantetheine moiety from coenzyme A to a Ser of acyl-carrier-protein. This is Holo-[acyl-carrier-protein] synthase from Helicobacter pylori (strain G27).